A 2028-amino-acid polypeptide reads, in one-letter code: Transient receptor potential cation channel subfamily M member 6 (2028 aa).

The Cytoplasmic portion of the chain corresponds to 1 to 747 (MQVKKSWIEG…MWMGRLKMRK (747 aa)). A disordered region spans residues 577 to 601 (QPYKSKEKPEDSQKSKKKSKERQSL). Residues 580–590 (KSKEKPEDSQK) show a composition bias toward basic and acidic residues. Residues 748–768 (NSWLKIIISILLPPMILTLEF) traverse the membrane as a helical segment. The Extracellular segment spans residues 769-847 (KSKAEMSHVP…YEFYSAPFVK (79 aa)). A helical membrane pass occupies residues 848-868 (FWFYTMAYLAFLMLFTYTVLV). The Cytoplasmic portion of the chain corresponds to 869-910 (EMQPQPSVHEWLVIIYIFTNAIEKVREICISEPSKFKQKVKM). Residues 911–931 (WLSEYWNLMETVAIGLFAVGF) traverse the membrane as a helical segment. Over 932-945 (GLRWGHPPLQTAGR) the chain is Extracellular. The helical transmembrane segment at 946–966 (LIYCIDIIFWFSRLMDFFAVN) threads the bilayer. The Cytoplasmic portion of the chain corresponds to 967–978 (QHAGPYVTMIAK). Residues 979–999 (MAANMFYIVIIMAIVLLSFGV) form a helical membrane-spanning segment. The Extracellular segment spans residues 1000–1018 (ARKAILSPKEPPSWRLARD). The segment at residues 1019–1039 (IVFEPYWMMYGEVYASDIDVC) is an intramembrane region (pore-forming). At 1040 to 1053 (SNETSCPPGSFLTP) the chain is on the extracellular side. Residues 1054-1074 (FLQAVYLFVQYIIMVNLLIAC) form a helical membrane-spanning segment. Topologically, residues 1075 to 2028 (FNNIYLDIKS…RSSLEDHTRL (954 aa)) are cytoplasmic. 2 stretches are compositionally biased toward basic and acidic residues: residues 1313-1323 (KREASHVREEQ) and 1665-1677 (DHLRQPQENRDKT). Disordered stretches follow at residues 1313–1339 (KREASHVREEQEEREMEQRTTASGISH) and 1658–1694 (RHTTQASDHLRQPQENRDKTPTWNSGSTSLSRSFLTR). Residues 1682-1694 (SGSTSLSRSFLTR) are compositionally biased toward low complexity. Thr-1730 is subject to Phosphothreonine; by autocatalysis. Residues 1756-1986 (TLDKSMSSWS…CCGKLRLPDL (231 aa)) enclose the Alpha-type protein kinase domain. 5 residues coordinate ADP: Gly-1783, Gly-1784, Leu-1785, Arg-1786, and Lys-1810. At Thr-1857 the chain carries Phosphothreonine; by autocatalysis. Residues Glu-1882 and Met-1885 each coordinate ADP. His-1915 serves as a coordination point for Zn(2+). Asp-1929 acts as the Proton acceptor in catalysis. An ADP-binding site is contributed by Asp-1939. Residues His-1972, Cys-1974, and Cys-1978 each coordinate Zn(2+). Residues 2009–2028 (TEELPERDKNRSSLEDHTRL) form a disordered region. A compositionally biased stretch (basic and acidic residues) spans 2012–2028 (LPERDKNRSSLEDHTRL).

This sequence in the C-terminal section; belongs to the protein kinase superfamily. Alpha-type protein kinase family. ALPK subfamily. The protein in the N-terminal section; belongs to the transient receptor (TC 1.A.4) family. LTrpC subfamily. TRPM6 sub-subfamily. As to quaternary structure, forms heteromers with TRPM7; TRPM6 increases the current amplitude of TRPM6/7 heteromers as compared to TRPM7 homomers. Interacts (via kinase domain) with RACK1. Post-translationally, autophosphorylated; autophosphorylation controls the protein kinase activity of TRPM6 towards their substrates. Autophosphorylation of Thr-1857 in the kinase domain is essential for the inhibitory effect of RACK1. The C-terminus of TRPM6 is proteolytically cleaved in vivo, in a cell type-specific fashion, releasing the kinase module from the transmembrane domain. The cleaved kinase fragments are translocated to the nucleus to phosphorylate histones and regulate gene expression.

Its subcellular location is the cell membrane. It localises to the apical cell membrane. The protein resides in the nucleus. It carries out the reaction L-seryl-[protein] + ATP = O-phospho-L-seryl-[protein] + ADP + H(+). It catalyses the reaction L-threonyl-[protein] + ATP = O-phospho-L-threonyl-[protein] + ADP + H(+). The catalysed reaction is Mg(2+)(in) = Mg(2+)(out). The enzyme catalyses Ca(2+)(in) = Ca(2+)(out). It carries out the reaction Zn(2+)(in) = Zn(2+)(out). Strongly inhibited by intracellular Mg(2+); unlikely to be active at physiological levels of intracellular Mg(2+). In the heteromeric TRPM6-TRPM7 channels complexes, TRPM7 are able to offset the very high sensitivity of TRPM6 to cytosolic Mg(2+) to physiologically relevant concentrations, whereas TRPM6 relieve TRPM7 from the inhibitory action of Mg-ATP. Consequently, the association of TRPM6 with TRPM7 allow for high constitutive activity of TRPM6/7 in the presence of physiological levels of Mg(2+) and Mg-ATP. The kinase activity is controlled through the autophosphorylation of a serine/threonine-rich region located to the N-terminal of the catalytic domain. Its function is as follows. Bifunctional protein that combines an ion channel with an intrinsic kinase domain, enabling it to modulate cellular functions either by conducting ions through the pore or by phosphorylating downstream proteins via its kinase domain. Crucial for Mg(2+) homeostasis. Has an important role in epithelial magnesium transport and in the active Mg(2+) absorption in the gut and kidney. However, whether TRPM6 forms functional homomeric channels by itself or functions primarily as a subunit of heteromeric TRPM6-TRPM7 channels, is still under debate. The C-terminal kinase domain can be cleaved from the channel segment in a cell-type-specific fashion. The cleaved kinase fragments can translocate to the nucleus, and bind chromatin-remodeling complex proteins to ultimately phosphorylate specific Ser/Thr residues of histones known to be functionally important for cell differentiation and development. In Mus musculus (Mouse), this protein is Transient receptor potential cation channel subfamily M member 6 (Trpm6).